The sequence spans 252 residues: Uridylate kinase (252 aa).

24 to 27 provides a ligand contact to ATP; the sequence is KLSG. The interval 32 to 37 is involved in allosteric activation by GTP; that stretch reads GEEGFG. Position 66 (Gly66) interacts with UMP. The ATP site is built by Gly67 and Arg71. UMP contacts are provided by residues Asp86 and 147-154; that span reads TGNPFFTT. The ATP site is built by Thr174, Tyr180, and Asp183.

It belongs to the UMP kinase family. In terms of assembly, homohexamer.

The protein resides in the cytoplasm. It carries out the reaction UMP + ATP = UDP + ADP. The protein operates within pyrimidine metabolism; CTP biosynthesis via de novo pathway; UDP from UMP (UMPK route): step 1/1. Allosterically activated by GTP. Inhibited by UTP. Catalyzes the reversible phosphorylation of UMP to UDP. This chain is Uridylate kinase, found in Alcanivorax borkumensis (strain ATCC 700651 / DSM 11573 / NCIMB 13689 / SK2).